The following is a 497-amino-acid chain: Tripartite motif-containing protein 5 (497 aa).

The residue at position 2 (A2) is an N-acetylalanine. The segment at 15–60 (CPICLELLTEPLSLPCGHSFCQACITANHRKSMLYKEGERSCPVCR) adopts an RING-type zinc-finger fold. Residue S87 is modified to Phosphoserine. The B box-type zinc finger occupies 92–133 (LKVDHCARHGEKLLLFCQEDSKVICWLCERSQEHRGHHTFLM). Residues C97, H100, C119, and H125 each contribute to the Zn(2+) site. Residues 137 to 225 (AQEYHVKLQT…LTKSETEMVQ (89 aa)) adopt a coiled-coil conformation. The interval 187 to 200 (FEQLREILDWEESN) is required for interaction with GABARAP and for autophagy. Residues 283-497 (LKGMLDMFRE…VPMTLCSPSS (215 aa)) form the B30.2/SPRY domain.

Belongs to the TRIM/RBCC family. As to quaternary structure, can form homodimers and homotrimers. In addition to lower-order dimerization, also exhibits a higher-order multimerization and both low- and high-order multimerizations are essential for its restriction activity. Interacts with BTBD1 and BTBD2. Interacts with PSMC4, PSMC5, PSMD7 and HSPA8/HSC70. Interacts (via B30.2/SPRY domain) with HSPA1A/B. Interacts with PSMC2, MAP3K7/TAK1, TAB2 and TAB3. Interacts with SQSTM1. Interacts with TRIM6 and TRIM34. Interacts with ULK1 (phosphorylated form), GABARAP, GABARAPL1, GABARAPL2, MAP1LC3A, MAP1LC3C and BECN1. Degraded in a proteasome-independent fashion in the absence of viral infection but in a proteasome-dependent fashion following exposure to restriction sensitive virus. Post-translationally, autoubiquitinated in a RING finger- and UBE2D2-dependent manner. Monoubiquitinated by TRIM21. Deubiquitinated by Yersinia YopJ. Ubiquitination may not lead to proteasomal degradation.

Its subcellular location is the cytoplasm. It localises to the nucleus. The catalysed reaction is S-ubiquitinyl-[E2 ubiquitin-conjugating enzyme]-L-cysteine + [acceptor protein]-L-lysine = [E2 ubiquitin-conjugating enzyme]-L-cysteine + N(6)-ubiquitinyl-[acceptor protein]-L-lysine.. Its pathway is protein modification; protein ubiquitination. Functionally, capsid-specific restriction factor that prevents infection from non-host-adapted retroviruses. Blocks viral replication early in the life cycle, after viral entry but before reverse transcription. In addition to acting as a capsid-specific restriction factor, also acts as a pattern recognition receptor that activates innate immune signaling in response to the retroviral capsid lattice. Binding to the viral capsid triggers its E3 ubiquitin ligase activity, and in concert with the heterodimeric ubiquitin conjugating enzyme complex UBE2V1-UBE2N (also known as UBC13-UEV1A complex) generates 'Lys-63'-linked polyubiquitin chains, which in turn are catalysts in the autophosphorylation of the MAP3K7/TAK1 complex (includes TAK1, TAB2, and TAB3). Activation of the MAP3K7/TAK1 complex by autophosphorylation results in the induction and expression of NF-kappa-B and MAPK-responsive inflammatory genes, thereby leading to an innate immune response in the infected cell. Plays a role in regulating autophagy through activation of autophagy regulator BECN1 by causing its dissociation from its inhibitors BCL2 and TAB2. This chain is Tripartite motif-containing protein 5 (TRIM5), found in Papio anubis (Olive baboon).